The chain runs to 322 residues: Nodulation protein D 1 (322 aa).

The HTH lysR-type domain occupies 6 to 63; that stretch reads LDLNLLVALDALMTERKLTAAARSINLSQPAMSAAITRLRTYFRDELFTMNGRELVPT. Residues 23–42 constitute a DNA-binding region (H-T-H motif); that stretch reads LTAAARSINLSQPAMSAAIT.

This sequence belongs to the LysR transcriptional regulatory family.

Regulates the expression of the nod abcFE genes which encode other nodulation proteins. NodD is also a negative regulator of its own expression. Binds flavonoids as inducers. The sequence is that of Nodulation protein D 1 (nodD1) from Sinorhizobium fredii (strain NBRC 101917 / NGR234).